We begin with the raw amino-acid sequence, 427 residues long: Gamma-glutamyl phosphate reductase (427 aa).

It belongs to the gamma-glutamyl phosphate reductase family.

The protein resides in the cytoplasm. It catalyses the reaction L-glutamate 5-semialdehyde + phosphate + NADP(+) = L-glutamyl 5-phosphate + NADPH + H(+). It functions in the pathway amino-acid biosynthesis; L-proline biosynthesis; L-glutamate 5-semialdehyde from L-glutamate: step 2/2. Catalyzes the NADPH-dependent reduction of L-glutamate 5-phosphate into L-glutamate 5-semialdehyde and phosphate. The product spontaneously undergoes cyclization to form 1-pyrroline-5-carboxylate. This is Gamma-glutamyl phosphate reductase from Rhizobium etli (strain CIAT 652).